The primary structure comprises 79 residues: Acyl carrier protein (79 aa).

The Carrier domain occupies 2–77 (SNIEERVKKI…QAIDYINAHA (76 aa)). Position 37 is an O-(pantetheine 4'-phosphoryl)serine (Ser37).

Belongs to the acyl carrier protein (ACP) family. In terms of processing, 4'-phosphopantetheine is transferred from CoA to a specific serine of apo-ACP by AcpS. This modification is essential for activity because fatty acids are bound in thioester linkage to the sulfhydryl of the prosthetic group.

It is found in the cytoplasm. It functions in the pathway lipid metabolism; fatty acid biosynthesis. Its function is as follows. Carrier of the growing fatty acid chain in fatty acid biosynthesis. This chain is Acyl carrier protein, found in Thioalkalivibrio sulfidiphilus (strain HL-EbGR7).